Reading from the N-terminus, the 630-residue chain is Telomere repeat-binding protein 5 (630 aa).

Disordered regions lie at residues 1 to 38 (MVLQ…SENH), 56 to 78 (EGGN…CAVK), and 308 to 327 (YTAS…GSPR). Positions 57–71 (GGNSSSSSNNTSGNN) are enriched in low complexity. Residues 309-325 (TASQSEETNKNEGQSGS) show a composition bias toward polar residues. Positions 354 to 433 (VKLGIKSFRV…SDTLGFCLEP (80 aa)) constitute a Ubiquitin-like domain. The segment at 463-489 (LPSPGKHAKPSNSVESDLDSKPSAPNR) is disordered. One can recognise an HTH myb-type domain in the interval 523–582 (AQRRIRRPFSVAEVEALVQAVERLGTGRWRDVKLRAFDNAKHRTYVDLKDKWKTLVHTAR). The segment at residues 551–578 (WRDVKLRAFDNAKHRTYVDLKDKWKTLV) is a DNA-binding region (H-T-H motif).

Homodimer. Expressed ubiquitously.

It localises to the nucleus. Binds specifically to the plant telomeric double-stranded DNA sequences. At least 6 repeats of telomeric sequences are required for binding. The protein is Telomere repeat-binding protein 5 (TRP5) of Arabidopsis thaliana (Mouse-ear cress).